Here is a 189-residue protein sequence, read N- to C-terminus: ATP synthase subunit b (189 aa).

The helical transmembrane segment at 25–45 (LPVWPEVVIGLICFGIVFFVF) threads the bilayer.

The protein belongs to the ATPase B chain family. As to quaternary structure, F-type ATPases have 2 components, F(1) - the catalytic core - and F(0) - the membrane proton channel. F(1) has five subunits: alpha(3), beta(3), gamma(1), delta(1), epsilon(1). F(0) has three main subunits: a(1), b(2) and c(10-14). The alpha and beta chains form an alternating ring which encloses part of the gamma chain. F(1) is attached to F(0) by a central stalk formed by the gamma and epsilon chains, while a peripheral stalk is formed by the delta and b chains.

It localises to the cell membrane. Its function is as follows. F(1)F(0) ATP synthase produces ATP from ADP in the presence of a proton or sodium gradient. F-type ATPases consist of two structural domains, F(1) containing the extramembraneous catalytic core and F(0) containing the membrane proton channel, linked together by a central stalk and a peripheral stalk. During catalysis, ATP synthesis in the catalytic domain of F(1) is coupled via a rotary mechanism of the central stalk subunits to proton translocation. Component of the F(0) channel, it forms part of the peripheral stalk, linking F(1) to F(0). The chain is ATP synthase subunit b from Streptomyces griseus subsp. griseus (strain JCM 4626 / CBS 651.72 / NBRC 13350 / KCC S-0626 / ISP 5235).